We begin with the raw amino-acid sequence, 308 residues long: MRFRGLDLNLLVALDALMTERKLTAAARRINLSQPAMSAAIARLRTYFGDELFSMQGRELIPTPRAEALAPAVRDALLHIQLSVIAWDPLNPAQSDRRFRIILSDFMILVFFARIVERVAREAPGVSFELLPLDDDPHELLRRGDVDFLIFPDVFMSSAHPKAKLFDEALVCVGCPTNKKLLGNISFETYMSMGHVAAQFGREMKPSVEQWLLLEHGFNRRIELVVPGFTLIPRLLSGTNRIATLPLRLVKYFEQTIPLRIVTSPLPPLFFTEAIQWPALHNTDPGNIWLREILLQEASRIDPQSDTC.

The HTH lysR-type domain maps to 6–63 (LDLNLLVALDALMTERKLTAAARRINLSQPAMSAAIARLRTYFGDELFSMQGRELIPT). Positions 23-42 (LTAAARRINLSQPAMSAAIA) form a DNA-binding region, H-T-H motif.

This sequence belongs to the LysR transcriptional regulatory family.

NodD regulates the expression of the nodABCFE genes which encode other nodulation proteins. NodD is also a negative regulator of its own expression. Binds flavonoids as inducers. This is Nodulation protein D 1 (nodD1) from Rhizobium meliloti (strain 1021) (Ensifer meliloti).